A 203-amino-acid chain; its full sequence is Holliday junction branch migration complex subunit RuvA (203 aa).

Positions 1–64 (MIGRLNGILV…EDAQLLYGFI (64 aa)) are domain I. Residues 65-143 (TKQERALFRL…SLLEASVGNE (79 aa)) are domain II. Residues 144–154 (REFMLQTNYTA) form a flexible linker region. The interval 155-203 (PAANAEEDAISALVSLGYKPPQASRAVSKAYKEGMDTETLIKLALKSML) is domain III.

The protein belongs to the RuvA family. As to quaternary structure, homotetramer. Forms an RuvA(8)-RuvB(12)-Holliday junction (HJ) complex. HJ DNA is sandwiched between 2 RuvA tetramers; dsDNA enters through RuvA and exits via RuvB. An RuvB hexamer assembles on each DNA strand where it exits the tetramer. Each RuvB hexamer is contacted by two RuvA subunits (via domain III) on 2 adjacent RuvB subunits; this complex drives branch migration. In the full resolvosome a probable DNA-RuvA(4)-RuvB(12)-RuvC(2) complex forms which resolves the HJ.

It localises to the cytoplasm. Its function is as follows. The RuvA-RuvB-RuvC complex processes Holliday junction (HJ) DNA during genetic recombination and DNA repair, while the RuvA-RuvB complex plays an important role in the rescue of blocked DNA replication forks via replication fork reversal (RFR). RuvA specifically binds to HJ cruciform DNA, conferring on it an open structure. The RuvB hexamer acts as an ATP-dependent pump, pulling dsDNA into and through the RuvAB complex. HJ branch migration allows RuvC to scan DNA until it finds its consensus sequence, where it cleaves and resolves the cruciform DNA. This Shewanella denitrificans (strain OS217 / ATCC BAA-1090 / DSM 15013) protein is Holliday junction branch migration complex subunit RuvA.